The chain runs to 298 residues: Probable 2-(5''-triphosphoribosyl)-3'-dephosphocoenzyme-A synthase 2 (298 aa).

This sequence belongs to the CitG/MdcB family.

It catalyses the reaction 3'-dephospho-CoA + ATP = 2'-(5''-triphospho-alpha-D-ribosyl)-3'-dephospho-CoA + adenine. This chain is Probable 2-(5''-triphosphoribosyl)-3'-dephosphocoenzyme-A synthase 2, found in Salmonella paratyphi A (strain ATCC 9150 / SARB42).